We begin with the raw amino-acid sequence, 705 residues long: Fatty acid oxidation complex subunit alpha (705 aa).

Positions M1–P190 are enoyl-CoA hydratase. A 3-hydroxyacyl-CoA dehydrogenase region spans residues S308–N705.

It in the N-terminal section; belongs to the enoyl-CoA hydratase/isomerase family. The protein in the central section; belongs to the 3-hydroxyacyl-CoA dehydrogenase family. Heterotetramer of two alpha chains (FadJ) and two beta chains (FadI).

Its subcellular location is the cytoplasm. It carries out the reaction a (3S)-3-hydroxyacyl-CoA = a (2E)-enoyl-CoA + H2O. The enzyme catalyses a 4-saturated-(3S)-3-hydroxyacyl-CoA = a (3E)-enoyl-CoA + H2O. It catalyses the reaction a (3S)-3-hydroxyacyl-CoA + NAD(+) = a 3-oxoacyl-CoA + NADH + H(+). The catalysed reaction is (3S)-3-hydroxybutanoyl-CoA = (3R)-3-hydroxybutanoyl-CoA. It participates in lipid metabolism; fatty acid beta-oxidation. Catalyzes the formation of a hydroxyacyl-CoA by addition of water on enoyl-CoA. Also exhibits 3-hydroxyacyl-CoA epimerase and 3-hydroxyacyl-CoA dehydrogenase activities. This Vibrio vulnificus (strain CMCP6) protein is Fatty acid oxidation complex subunit alpha.